The sequence spans 89 residues: Small ribosomal subunit protein uS15 (89 aa).

It belongs to the universal ribosomal protein uS15 family. In terms of assembly, part of the 30S ribosomal subunit. Forms a bridge to the 50S subunit in the 70S ribosome, contacting the 23S rRNA.

Its function is as follows. One of the primary rRNA binding proteins, it binds directly to 16S rRNA where it helps nucleate assembly of the platform of the 30S subunit by binding and bridging several RNA helices of the 16S rRNA. Functionally, forms an intersubunit bridge (bridge B4) with the 23S rRNA of the 50S subunit in the ribosome. The polypeptide is Small ribosomal subunit protein uS15 (Bifidobacterium longum (strain DJO10A)).